The chain runs to 83 residues: Cytochrome b559 subunit alpha (83 aa).

A helical transmembrane segment spans residues V21 to W35. Heme is bound at residue H23.

This sequence belongs to the PsbE/PsbF family. In terms of assembly, heterodimer of an alpha subunit and a beta subunit. PSII is composed of 1 copy each of membrane proteins PsbA, PsbB, PsbC, PsbD, PsbE, PsbF, PsbH, PsbI, PsbJ, PsbK, PsbL, PsbM, PsbT, PsbX, PsbY, PsbZ, Psb30/Ycf12, at least 3 peripheral proteins of the oxygen-evolving complex and a large number of cofactors. It forms dimeric complexes. It depends on heme b as a cofactor.

The protein resides in the plastid. The protein localises to the chloroplast thylakoid membrane. Its function is as follows. This b-type cytochrome is tightly associated with the reaction center of photosystem II (PSII). PSII is a light-driven water:plastoquinone oxidoreductase that uses light energy to abstract electrons from H(2)O, generating O(2) and a proton gradient subsequently used for ATP formation. It consists of a core antenna complex that captures photons, and an electron transfer chain that converts photonic excitation into a charge separation. The protein is Cytochrome b559 subunit alpha of Chlorella vulgaris (Green alga).